Reading from the N-terminus, the 212-residue chain is MATSVAPSPVPESSPLSHATEVLNLPNAYITQPHPIPAAPWETFRSKLSTKHTLCFALTLLLTLGGTISAGYAGYTGNWIICGIGLGIIVLTLILALLLAIPLKNKQTGTKLIDEISQDISSIGSGFVQRYGLMFSTIKSVHLPELTTQNQEKTRILNEIEAKKESIQNLELKITECQNKLAQKQPKRKSSQKSFMRSIKHLSKNPVILFDC.

2 consecutive transmembrane segments (helical) span residues 54 to 74 (LCFALTLLLTLGGTISAGYAG) and 79 to 99 (WIICGIGLGIIVLTLILALLL).

It is found in the cell membrane. This is an uncharacterized protein from Chlamydia pneumoniae (Chlamydophila pneumoniae).